The sequence spans 819 residues: Leucine--tRNA ligase (819 aa).

Residues 40-51 (PYPSGAGLHVGH) carry the 'HIGH' region motif. The short motif at 600–604 (KMSKS) is the 'KMSKS' region element. Lys-603 is a binding site for ATP.

This sequence belongs to the class-I aminoacyl-tRNA synthetase family.

The protein localises to the cytoplasm. It carries out the reaction tRNA(Leu) + L-leucine + ATP = L-leucyl-tRNA(Leu) + AMP + diphosphate. This Chlamydia trachomatis serovar D (strain ATCC VR-885 / DSM 19411 / UW-3/Cx) protein is Leucine--tRNA ligase.